We begin with the raw amino-acid sequence, 238 residues long: Sugar fermentation stimulation protein homolog (238 aa).

It belongs to the SfsA family.

The chain is Sugar fermentation stimulation protein homolog from Klebsiella pneumoniae (strain 342).